Consider the following 394-residue polypeptide: Protein DDI1 homolog 2 (394 aa).

In terms of domain architecture, Ubiquitin-like spans 1–81; that stretch reads MLITVYCVRR…VILRQRETPE (81 aa). The interval 82–128 is disordered; it reads ARPAAPFPGLDFSTIAVPGSSSQPAPSQPQAPPPPPPDTSSFPQGLD. A compositionally biased stretch (pro residues) spans 107 to 119; it reads PSQPQAPPPPPPD. Asp-247 is an active-site residue. The Ubiquitin-binding signature appears at 371-390; it reads EEIADRELAEVLQKSAEEAD.

It belongs to the DDI1 family. As to quaternary structure, homodimer.

Its subcellular location is the cytoplasm. The protein localises to the cytosol. The protein resides in the chromosome. Aspartic protease that mediates the cleavage of NFE2L1/NRF1 at 'Leu-104', thereby promoting release of NFE2L1/NRF1 from the endoplasmic reticulum membrane. Ubiquitination of NFE2L1/NRF1 is a prerequisite for cleavage, suggesting that DDI2 specifically recognizes and binds ubiquitinated NFE2L1/NRF1. Seems to act as a proteasomal shuttle which links the proteasome and replication fork proteins like RTF2. Required for cellular survival following replication stress. In Xenopus tropicalis (Western clawed frog), this protein is Protein DDI1 homolog 2 (ddi2).